Here is a 363-residue protein sequence, read N- to C-terminus: MAMVLENSSAELLRALAHLSNKRGNFKDGAALKCAVELGIPDVIQKHGKPAMTLSELTAALPIKQSKAHCINRIMRVLVNAGFFVEQRSGDGKRDDEEESYALTPACRLLLKDEPLNARAHVLFTLDPAEMVALGSLSEWLQDDYPTAFETANGKNYWDYIAERPARNKLFNEALAVDSRLIATVLISEFKFVFEGLTSLVDVGGGTGTIARAIAETFPNMKCIVLDLQQVVEDADLEGTENLEFVAGDMFEKIPNANAILLKMVLHDWSDEDCVRILKNCKRVIPEKEKGGKIILIELVLGGQNKDHVTVEAEICMDMEMLASFGGKERTEKEWAKLFQDAGLSGYKVFSNLDSRCVIEVYP.

Positions 204, 227, 249, 250, and 263 each coordinate S-adenosyl-L-methionine. The Proton acceptor role is filled by histidine 267.

This sequence belongs to the class I-like SAM-binding methyltransferase superfamily. Cation-independent O-methyltransferase family.

It carries out the reaction 10-hydroxystrychnine + S-adenosyl-L-methionine = beta-colubrine + S-adenosyl-L-homocysteine + H(+). It catalyses the reaction 11-demethylbrucine + S-adenosyl-L-methionine = brucine + S-adenosyl-L-homocysteine + H(+). Its pathway is alkaloid biosynthesis. Functionally, O-methyltransferase involved in the biosynthesis of curare monoterpene indole alkaloids (MIAs), natural products such as strychnine, a neurotoxic compound used as a pesticide to control rodents, and its pharmacologically active derivatives, including brucine, used to regulate blood pressure. Curare alkaloids act as animal glycine receptor antagonists. Catalyzes the conversion of 10-OH strychnine to beta-colubrine, and of 11-deMe brucine to brucine. This chain is Strychnine O-methyltransferase, found in Strychnos nux-vomica (Poison nut).